Reading from the N-terminus, the 618-residue chain is Acetolactate synthase (618 aa).

The tract at residues 1–30 (MSAPTKPHSPTFKPEPHSAANEPKHPAARP) is disordered. E85 is a binding site for thiamine diphosphate. FAD contacts are provided by residues R187, 293–314 (HGTV…LGTR), and 336–355 (DIDP…IVGD). The tract at residues 429–509 (QHQMWAAQFI…VKVALINNGN (81 aa)) is thiamine pyrophosphate binding. Mg(2+) contacts are provided by D480 and N507.

The protein belongs to the TPP enzyme family. Mg(2+) is required as a cofactor. The cofactor is thiamine diphosphate.

The catalysed reaction is 2 pyruvate + H(+) = (2S)-2-acetolactate + CO2. Its pathway is amino-acid biosynthesis; L-isoleucine biosynthesis; L-isoleucine from 2-oxobutanoate: step 1/4. The protein operates within amino-acid biosynthesis; L-valine biosynthesis; L-valine from pyruvate: step 1/4. The protein is Acetolactate synthase (ilvB) of Mycobacterium bovis (strain ATCC BAA-935 / AF2122/97).